We begin with the raw amino-acid sequence, 208 residues long: Adenylyl-sulfate kinase (208 aa).

Residue 31-38 participates in ATP binding; sequence GLSGSGKS. The active-site Phosphoserine intermediate is the S105.

Belongs to the APS kinase family.

The catalysed reaction is adenosine 5'-phosphosulfate + ATP = 3'-phosphoadenylyl sulfate + ADP + H(+). The protein operates within sulfur metabolism; hydrogen sulfide biosynthesis; sulfite from sulfate: step 2/3. In terms of biological role, catalyzes the synthesis of activated sulfate. This is Adenylyl-sulfate kinase from Pseudomonas entomophila (strain L48).